Reading from the N-terminus, the 249-residue chain is Phosphoribosylaminoimidazole-succinocarboxamide synthase (249 aa).

It belongs to the SAICAR synthetase family.

The catalysed reaction is 5-amino-1-(5-phospho-D-ribosyl)imidazole-4-carboxylate + L-aspartate + ATP = (2S)-2-[5-amino-1-(5-phospho-beta-D-ribosyl)imidazole-4-carboxamido]succinate + ADP + phosphate + 2 H(+). The protein operates within purine metabolism; IMP biosynthesis via de novo pathway; 5-amino-1-(5-phospho-D-ribosyl)imidazole-4-carboxamide from 5-amino-1-(5-phospho-D-ribosyl)imidazole-4-carboxylate: step 1/2. The sequence is that of Phosphoribosylaminoimidazole-succinocarboxamide synthase from Roseiflexus castenholzii (strain DSM 13941 / HLO8).